Consider the following 213-residue polypeptide: Imidazole glycerol phosphate synthase subunit HisH (213 aa).

The region spanning 1 to 212 is the Glutamine amidotransferase type-1 domain; that stretch reads MLAILDYKAG…HRYCTEAADA (212 aa). The active-site Nucleophile is the cysteine 79. Residues histidine 187 and glutamate 189 contribute to the active site.

As to quaternary structure, heterodimer of HisH and HisF.

The protein localises to the cytoplasm. It catalyses the reaction 5-[(5-phospho-1-deoxy-D-ribulos-1-ylimino)methylamino]-1-(5-phospho-beta-D-ribosyl)imidazole-4-carboxamide + L-glutamine = D-erythro-1-(imidazol-4-yl)glycerol 3-phosphate + 5-amino-1-(5-phospho-beta-D-ribosyl)imidazole-4-carboxamide + L-glutamate + H(+). It carries out the reaction L-glutamine + H2O = L-glutamate + NH4(+). It functions in the pathway amino-acid biosynthesis; L-histidine biosynthesis; L-histidine from 5-phospho-alpha-D-ribose 1-diphosphate: step 5/9. Its function is as follows. IGPS catalyzes the conversion of PRFAR and glutamine to IGP, AICAR and glutamate. The HisH subunit catalyzes the hydrolysis of glutamine to glutamate and ammonia as part of the synthesis of IGP and AICAR. The resulting ammonia molecule is channeled to the active site of HisF. The protein is Imidazole glycerol phosphate synthase subunit HisH of Nitratidesulfovibrio vulgaris (strain DP4) (Desulfovibrio vulgaris).